The sequence spans 344 residues: Ribosomal RNA small subunit methyltransferase H 2 (344 aa).

S-adenosyl-L-methionine is bound by residues 78-80, aspartate 98, phenylalanine 131, aspartate 145, and glutamine 152; that span reads GGH.

Belongs to the methyltransferase superfamily. RsmH family.

The protein localises to the cytoplasm. The catalysed reaction is cytidine(1402) in 16S rRNA + S-adenosyl-L-methionine = N(4)-methylcytidine(1402) in 16S rRNA + S-adenosyl-L-homocysteine + H(+). Specifically methylates the N4 position of cytidine in position 1402 (C1402) of 16S rRNA. The chain is Ribosomal RNA small subunit methyltransferase H 2 from Acholeplasma laidlawii (strain PG-8A).